The following is a 227-amino-acid chain: MRCLKAVVAFFTALPVGGAELDFSCIWATPYLAGLMVGGAGGAVYFLTHSPAAAYAALLLATGLHHLDGLADVGDALMVRDRERARRVLEDPRRGVGGIFAVVALFVLAASARPESWLDYIVTDLYSKALALVVAAYSKPFKEGLGSLFIVSAKRQWPAALPALAVAAWLHPAAFLAATVLSLFFYVAAYKHLGGANGDLLGALLEVTRALYLATVDLSTSLINGLF.

5 consecutive transmembrane segments (helical) span residues 3 to 23 (CLKA…ELDF), 26 to 46 (IWAT…AVYF), 95 to 115 (GVGG…ARPE), 117 to 137 (WLDY…VAAY), and 165 to 185 (AVAA…SLFF).

The protein belongs to the CobS family. Mg(2+) is required as a cofactor.

The protein resides in the cell membrane. The enzyme catalyses alpha-ribazole + adenosylcob(III)inamide-GDP = adenosylcob(III)alamin + GMP + H(+). The catalysed reaction is alpha-ribazole 5'-phosphate + adenosylcob(III)inamide-GDP = adenosylcob(III)alamin 5'-phosphate + GMP + H(+). The protein operates within cofactor biosynthesis; adenosylcobalamin biosynthesis; adenosylcobalamin from cob(II)yrinate a,c-diamide: step 7/7. Functionally, joins adenosylcobinamide-GDP and alpha-ribazole to generate adenosylcobalamin (Ado-cobalamin). Also synthesizes adenosylcobalamin 5'-phosphate from adenosylcobinamide-GDP and alpha-ribazole 5'-phosphate. The protein is Adenosylcobinamide-GDP ribazoletransferase of Pyrobaculum islandicum (strain DSM 4184 / JCM 9189 / GEO3).